Consider the following 440-residue polypeptide: MSLLPTATVATIARYVGQRVTLAGWVYHKTEKGKLIFILLRDGSGTIQCVTFKKNVSEETFATAQSLTQESSCRITGSVRADERAPGGYELDVESIELIGPSHEYPITPKEHGVEFLMAHRHLWVRSAKQHAILRIRAEVIAAAQEWLNEQGFVRFDTPILTATAAEGTTNLFATDYFDLGKAYLAQTGQLYVEAGMMAFGKVYCFGPTFRAEKSKTRRHLTEFWMIEPEVAFADHEDNMRLQEEFVSAIVARVLERRRDDLQTLERDTTLLEQVRPPFPRITYDEAIELIAAHQGEVEGADPLPWGEDFGAPHETLIASKFDRPVFVERFPSAVKAFYMQPDPERPEVALCADLLAPEGYGEIIGGSQRIHDPILLEQRIREHGLRIEDYEWYLDLRRYGTVPHSGFGMGIERVVAWITGTRHIRETIPFPRQLYRIYP.

It belongs to the class-II aminoacyl-tRNA synthetase family. In terms of assembly, homodimer.

It localises to the cytoplasm. The enzyme catalyses tRNA(Asn) + L-asparagine + ATP = L-asparaginyl-tRNA(Asn) + AMP + diphosphate + H(+). This chain is Asparagine--tRNA ligase, found in Chloroflexus aurantiacus (strain ATCC 29364 / DSM 637 / Y-400-fl).